Reading from the N-terminus, the 281-residue chain is Sorbose reductase SOU1 (281 aa).

NADP(+) contacts are provided by Ile-47, Lys-74, and Asn-119. Active-site proton donor residues include Ser-173 and Tyr-188. NADP(+) is bound by residues Tyr-188, Lys-192, Ile-221, and Thr-223. Catalysis depends on Lys-192, which acts as the Lowers pKa of active site Tyr.

The protein belongs to the short-chain dehydrogenases/reductases (SDR) family. Homotetramer.

It carries out the reaction D-sorbitol + NADP(+) = keto-L-sorbose + NADPH + H(+). The protein operates within carbohydrate degradation; L-sorbose degradation. Functionally, catalyzes the NADP dependent reduction of L-sorbose to D-glucitol. Can also convert fructose to mannitol, but less efficiently. The polypeptide is Sorbose reductase SOU1 (SOU1) (Candida albicans (strain SC5314 / ATCC MYA-2876) (Yeast)).